A 589-amino-acid polypeptide reads, in one-letter code: V-type ATP synthase alpha chain 1 (589 aa).

239–246 (GPFGAGKT) lines the ATP pocket.

This sequence belongs to the ATPase alpha/beta chains family.

The catalysed reaction is ATP + H2O + 4 H(+)(in) = ADP + phosphate + 5 H(+)(out). Its function is as follows. Produces ATP from ADP in the presence of a proton gradient across the membrane. The V-type alpha chain is a catalytic subunit. In Treponema pallidum (strain Nichols), this protein is V-type ATP synthase alpha chain 1 (atpA1).